The primary structure comprises 1012 residues: Tolloid-like protein 2 (1012 aa).

The N-terminal stretch at 1–21 is a signal peptide; it reads MPLATTLGTLVLLLLLPLPRG. Residues 22 to 146 constitute a propeptide that is removed on maturation; it reads AEVTGDHSNV…AKTFSARVRR (125 aa). The tract at residues 83 to 135 is disordered; it reads KPSIDKPGHDTGGLEETSARWPNDTASNASIQAPRKDGKDATTFLPNPGTSNT. Positions 126 to 135 are enriched in polar residues; sequence FLPNPGTSNT. The Peptidase M12A domain maps to 146-346; that stretch reads RATTSRTERI…AQARKLYKCP (201 aa). Asparagine 168 carries N-linked (GlcNAc...) asparagine glycosylation. 4 cysteine pairs are disulfide-bonded: cysteine 189/cysteine 345, cysteine 209/cysteine 231, cysteine 211/cysteine 212, and cysteine 348/cysteine 374. Histidine 239 serves as a coordination point for Zn(2+). The active site involves glutamate 240. Positions 243 and 249 each coordinate Zn(2+). CUB domains are found at residues 348 to 460 and 461 to 573; these read CGET…YEAM and CGGD…FFKE. Asparagine 358 and asparagine 389 each carry an N-linked (GlcNAc...) asparagine glycan. 12 cysteine pairs are disulfide-bonded: cysteine 401–cysteine 423, cysteine 461–cysteine 487, cysteine 514–cysteine 536, cysteine 577–cysteine 589, cysteine 585–cysteine 598, cysteine 600–cysteine 613, cysteine 617–cysteine 643, cysteine 670–cysteine 692, cysteine 733–cysteine 744, cysteine 740–cysteine 753, cysteine 755–cysteine 768, and cysteine 773–cysteine 799. The region spanning 573-614 is the EGF-like 1; calcium-binding domain; the sequence is EVDECSWPDHGGCEQRCVNTLGSYTCACDPGYELAADKKTCE. The CUB 3 domain maps to 617–729; it reads CGGFITKLNG…RGFRAHFFSD (113 aa). An N-linked (GlcNAc...) asparagine glycan is attached at asparagine 625. One can recognise an EGF-like 2; calcium-binding domain in the interval 729-769; that stretch reads DKDECAKDNGGCQQECVNTFGSYLCRCRNGYRLHENGHDCK. CUB domains follow at residues 773–885 and 886–1002; these read CAYK…HSTE and CGGR…YTST. Asparagine 802 is a glycosylation site (N-linked (GlcNAc...) asparagine). Disulfide bonds link cysteine 826–cysteine 848, cysteine 886–cysteine 916, and cysteine 943–cysteine 965. Residues arginine 960 and arginine 963 each carry the omega-N-methylarginine modification.

Zn(2+) serves as cofactor.

The protein localises to the secreted. Functionally, protease which specifically processes pro-lysyl oxidase. Required for the embryonic development. Predominant protease, which in the development, influences dorsal-ventral patterning and skeletogenesis. In Mus musculus (Mouse), this protein is Tolloid-like protein 2 (Tll2).